The chain runs to 291 residues: 4-hydroxy-tetrahydrodipicolinate synthase (291 aa).

A pyruvate-binding site is contributed by T45. Y133 (proton donor/acceptor) is an active-site residue. K161 acts as the Schiff-base intermediate with substrate in catalysis. I203 contributes to the pyruvate binding site.

It belongs to the DapA family. Homotetramer; dimer of dimers.

It localises to the cytoplasm. It catalyses the reaction L-aspartate 4-semialdehyde + pyruvate = (2S,4S)-4-hydroxy-2,3,4,5-tetrahydrodipicolinate + H2O + H(+). The protein operates within amino-acid biosynthesis; L-lysine biosynthesis via DAP pathway; (S)-tetrahydrodipicolinate from L-aspartate: step 3/4. Its function is as follows. Catalyzes the condensation of (S)-aspartate-beta-semialdehyde [(S)-ASA] and pyruvate to 4-hydroxy-tetrahydrodipicolinate (HTPA). The chain is 4-hydroxy-tetrahydrodipicolinate synthase from Laribacter hongkongensis (strain HLHK9).